The chain runs to 66 residues: Cocaine- and amphetamine-regulated transcript protein (66 aa).

2 cysteine pairs are disulfide-bonded: cysteine 34/cysteine 52 and cysteine 40/cysteine 60.

It belongs to the CART family.

The protein localises to the secreted. Functionally, satiety factor closely associated with the actions of leptin and neuropeptide y; this anorectic peptide inhibits both normal and starvation-induced feeding and completely blocks the feeding response induced by neuropeptide Y and regulated by leptin in the hypothalamus. This is Cocaine- and amphetamine-regulated transcript protein (CARTPT) from Sus scrofa (Pig).